Reading from the N-terminus, the 231-residue chain is Female protein (231 aa).

Residues 1 to 19 (MDKMLLLLGVSILLSEVFA) form the signal peptide. One can recognise a Pentraxin (PTX) domain in the interval 24–223 (TGKVFVFPRE…YAVIRPRCVA (200 aa)). N-linked (GlcNAc...) asparagine glycosylation occurs at Asn-51. Cys-55 and Cys-114 form a disulfide bridge. Ca(2+) is bound by residues Asp-77, Asn-78, Glu-155, Gln-156, Asp-157, and Gln-167.

It belongs to the pentraxin family. In terms of assembly, homopentamer. Pentraxin (or pentaxin) have a discoid arrangement of 5 non-covalently bound subunits. It depends on Ca(2+) as a cofactor.

Its subcellular location is the secreted. This is Female protein from Nothocricetulus migratorius (Gray dwarf hamster).